An 89-amino-acid polypeptide reads, in one-letter code: LYR motif-containing protein 4 (89 aa).

It belongs to the complex I LYR family.

The protein localises to the mitochondrion. Its subcellular location is the nucleus. The protein operates within cofactor biosynthesis; iron-sulfur cluster biosynthesis. Required for nuclear and mitochondrial iron-sulfur protein biosynthesis. This chain is LYR motif-containing protein 4 (lyrm4), found in Danio rerio (Zebrafish).